Consider the following 580-residue polypeptide: uncharacterized protein (580 aa).

Disordered stretches follow at residues 161–241 (SFSP…SVND), 256–281 (LGSL…SFSD), 325–345 (NVSH…QLLK), 472–495 (PRDT…DNSD), and 544–564 (SAVL…KEVR). The segment covering 192-203 (SNSNSSDTSTDD) has biased composition (low complexity). 2 stretches are compositionally biased toward polar residues: residues 223–241 (THSS…SVND) and 256–269 (LGSL…TAQK). The span at 326–341 (VSHEEKSHSVQDDKSK) shows a compositional bias: basic and acidic residues. Residues 481-495 (PNLSQSGNINSDNSD) show a composition bias toward polar residues.

This is an uncharacterized protein from Schizosaccharomyces pombe (strain 972 / ATCC 24843) (Fission yeast).